The primary structure comprises 130 residues: Anti-adapter protein IraD (130 aa).

Belongs to the GpW/Gp25 family. IraD subfamily. As to quaternary structure, interacts with RssB.

It localises to the cytoplasm. Its function is as follows. Inhibits RpoS proteolysis by regulating RssB activity, thereby increasing the stability of the sigma stress factor RpoS during oxidative stress. Its effect on RpoS stability is due to its interaction with RssB, which probably blocks the interaction of RssB with RpoS, and the consequent delivery of the RssB-RpoS complex to the ClpXP protein degradation pathway. The polypeptide is Anti-adapter protein IraD (Shigella boydii serotype 4 (strain Sb227)).